Here is a 91-residue protein sequence, read N- to C-terminus: Large ribosomal subunit protein uL23 (91 aa).

The protein belongs to the universal ribosomal protein uL23 family. As to quaternary structure, part of the 50S ribosomal subunit. Contacts protein L29, and trigger factor when it is bound to the ribosome.

In terms of biological role, one of the early assembly proteins it binds 23S rRNA. One of the proteins that surrounds the polypeptide exit tunnel on the outside of the ribosome. Forms the main docking site for trigger factor binding to the ribosome. The chain is Large ribosomal subunit protein uL23 from Staphylococcus epidermidis (strain ATCC 35984 / DSM 28319 / BCRC 17069 / CCUG 31568 / BM 3577 / RP62A).